The chain runs to 96 residues: UPF0235 protein VC_0458 (96 aa).

This sequence belongs to the UPF0235 family.

This chain is UPF0235 protein VC_0458, found in Vibrio cholerae serotype O1 (strain ATCC 39315 / El Tor Inaba N16961).